A 596-amino-acid polypeptide reads, in one-letter code: MKNIRNFAIIAHIDHGKSTLADRLMEECKAVDPRKMKEQLLDSMKIERERGITIKSQTVMLKYTAKDNEDYVLNLIDTPGHVDFSYEVSRSLAACEGSLLIVDATQGLEAQTLANVYKAIDNDHAIIPVINKIDLDSAEPERVRAQIRDVIGISTENAVEVSAKLGTGIADLLESIVKYIPPPEGDVSERLQALLIDSWYDIYLGVVILVRVKNGSIKSGMTIEMMSNGNKYCVEKVGIFTPEKRNVTELRAGEIGFLTASIKNARDCNVGDTITDAKNPCTEHLPGFKQLRPVVFCSLFPVSSDEFEKLRQSLEKLHLNDSSFTFESESSSALGHGFRCGFLGMLHLEVITQRLDEEFDLALVLTAPSVVYRIHMKDSSVLELYNPTEMPDPSKIDHIEEPWIKASVMLPGDYIGEVINLCNEKRGEQIDLVYVDNKAILTYGLPLSEIVFDFYDKLKSVSKGYASLDWEIHGYRSSELVKLSIVINGEEVDALSVMIYRPNAEKRGREICERLKELIPRQQYKIAIQAAIGGKVIARETVNPYRKDVTAKLYGGDRTRRMKLLEKQKKGKKRMHSIGKVNIPQSAFMEALKVKP.

Residues 2–184 (KNIRNFAIIA…SIVKYIPPPE (183 aa)) form the tr-type G domain. GTP is bound by residues 14 to 19 (DHGKST) and 131 to 134 (NKID).

The protein belongs to the TRAFAC class translation factor GTPase superfamily. Classic translation factor GTPase family. LepA subfamily.

The protein localises to the cell inner membrane. It carries out the reaction GTP + H2O = GDP + phosphate + H(+). Required for accurate and efficient protein synthesis under certain stress conditions. May act as a fidelity factor of the translation reaction, by catalyzing a one-codon backward translocation of tRNAs on improperly translocated ribosomes. Back-translocation proceeds from a post-translocation (POST) complex to a pre-translocation (PRE) complex, thus giving elongation factor G a second chance to translocate the tRNAs correctly. Binds to ribosomes in a GTP-dependent manner. This is Elongation factor 4 from Neorickettsia sennetsu (strain ATCC VR-367 / Miyayama) (Ehrlichia sennetsu).